The primary structure comprises 187 residues: Transcriptional repressor NrdR (187 aa).

Residues 1-21 (MQCPYCQHTNSRVLESRSSEG) are disordered. Residues 3–34 (CPYCQHTNSRVLESRSSEGGQSIRRRRECLNC) fold into a zinc finger. Residues 49-139 (ITVIKHDGKK…VYGRFKGIKD (91 aa)) enclose the ATP-cone domain. Composition is skewed to polar residues over residues 152 to 162 (ISSPMSQWSKS) and 170 to 187 (SQTSPCLSLTHNGSENSR). Positions 152-187 (ISSPMSQWSKSSTRDRDQSQTSPCLSLTHNGSENSR) are disordered.

It belongs to the NrdR family. It depends on Zn(2+) as a cofactor.

Negatively regulates transcription of bacterial ribonucleotide reductase nrd genes and operons by binding to NrdR-boxes. The protein is Transcriptional repressor NrdR of Crocosphaera subtropica (strain ATCC 51142 / BH68) (Cyanothece sp. (strain ATCC 51142)).